We begin with the raw amino-acid sequence, 182 residues long: Ribulose bisphosphate carboxylase small subunit, chloroplastic 3 (182 aa).

The transit peptide at 1-41 (MASIMMNKSVVLSKECAKPLASPKVTLNKRGFATTIATKNR) directs the protein to the chloroplast.

This sequence belongs to the RuBisCO small chain family. As to quaternary structure, heterohexadecamer of 8 large and 8 small subunits.

It localises to the plastid. The protein resides in the chloroplast. Its function is as follows. RuBisCO catalyzes two reactions: the carboxylation of D-ribulose 1,5-bisphosphate, the primary event in carbon dioxide fixation, as well as the oxidative fragmentation of the pentose substrate. Both reactions occur simultaneously and in competition at the same active site. Although the small subunit is not catalytic it is essential for maximal activity. This is Ribulose bisphosphate carboxylase small subunit, chloroplastic 3 from Acetabularia acetabulum (Mermaid's wine glass).